The following is a 1045-amino-acid chain: Protein transport protein Sec16B (1045 aa).

The segment covering 1–13 (MEPWVPQWPPPSR) has biased composition (pro residues). Residues 1 to 78 (MEPWVPQWPP…PQHVPRLGAW (78 aa)) are disordered. Basic and acidic residues predominate over residues 22-33 (DSERGLQRDGYH). A compositionally biased stretch (polar residues) spans 50-60 (QDVQGSPQPQQ). Phosphoserine occurs at positions 55 and 137. Over residues 149–168 (RHLSEHRPENQSRTFRRDSE) the composition is skewed to basic and acidic residues. 4 disordered regions span residues 149–193 (RHLS…QERP), 707–733 (QQKA…TTES), 748–789 (APGC…YSVP), and 813–1045 (QTHS…TQPC). Serine 186 is subject to Phosphoserine. The central conserved domain (CCD); required for localization to endoplasmic reticulum exit sites stretch occupies residues 267–711 (APKKFYIPHV…RHQELQQKAA (445 aa)). Residues 773–784 (GPAAGPAGAPVP) are compositionally biased toward low complexity. Serine 852, serine 858, serine 866, and serine 867 each carry phosphoserine. The segment covering 916-926 (EDSSDSPDSEQ) has biased composition (acidic residues). Residues 942 to 953 (SPPPLLESPPLP) show a composition bias toward pro residues. Positions 957-966 (AFGGGTGRGE) are enriched in gly residues. Residues 989–998 (ESASSELYSN) show a composition bias toward polar residues.

Belongs to the SEC16 family. As to quaternary structure, SEC16A and SEC16B are each present in multiple copies in a heteromeric complex. Interacts with TFG. Interacts with SEC13. In terms of tissue distribution, liver.

It is found in the endoplasmic reticulum membrane. Its subcellular location is the golgi apparatus membrane. Its function is as follows. Plays a role in the organization of the endoplasmic reticulum exit sites (ERES), also known as transitional endoplasmic reticulum (tER). Required for secretory cargo traffic from the endoplasmic reticulum to the Golgi apparatus. Involved in peroxisome biogenesis. Regulates the transport of peroxisomal biogenesis factors PEX3 and PEX16 from the ER to peroxisomes. This is Protein transport protein Sec16B (SEC16B) from Oryctolagus cuniculus (Rabbit).